We begin with the raw amino-acid sequence, 2718 residues long: E3 SUMO-protein ligase RanBP2 (2718 aa).

The tract at residues Met-1 to Asp-100 is sufficient for interaction with Hsp83. The tract at residues Met-1–Asn-200 is sufficient for interaction with piwi. 2 TPR repeats span residues Asp-26–Asp-58 and Ala-59–Gln-94. 2 disordered regions span residues Gln-796–Asn-816 and Glu-937–Val-959. Over residues Gly-803–Asn-816 the composition is skewed to polar residues. Copy 1 of the repeat occupies Phe-808–Gly-809. The 27 X 2 AA repeats of F-G stretch occupies residues Phe-808–Gly-2581. Over residues His-938 to Gln-948 the composition is skewed to low complexity. Repeat copies occupy residues Phe-1028 to Gly-1029, Phe-1035 to Gly-1036, and Phe-1104 to Gly-1105. Positions Gln-1181–Gln-1208 are disordered. Residues Val-1192–Gln-1208 show a composition bias toward polar residues. Copy 5 of the repeat occupies Phe-1252–Gly-1253. Disordered stretches follow at residues Phe-1263–Ile-1314 and Asn-1483–Ala-1502. The span at Asn-1284–Thr-1299 shows a compositional bias: polar residues. A RanBD1 1 domain is found at Asp-1309–Ser-1445. Positions Asn-1483–Pro-1493 are enriched in polar residues. 4 tandem repeats follow at residues Phe-1506 to Gly-1507, Phe-1539 to Gly-1540, Phe-1547 to Gly-1548, and Phe-1552 to Gly-1553. The RanBD1 2 domain maps to Gln-1605–Asn-1742. Residues Gln-1738 to Lys-1761 form a disordered region. The span at Glu-1743–Ile-1760 shows a compositional bias: basic and acidic residues. The stretch at Phe-1763–Gly-1764 is repeat 10. The RanBP2-type 1 zinc finger occupies Lys-1770–Ala-1799. 4 tandem repeats follow at residues Phe-1826–Gly-1827, Phe-1842–Gly-1843, Phe-1874–Gly-1875, and Phe-1883–Gly-1884. A RanBP2-type 2 zinc finger spans residues Ala-1890–Asp-1919. Tandem repeats lie at residues Phe-1942–Gly-1943 and Phe-1944–Gly-1945. Disordered stretches follow at residues Phe-1981–Ser-2021, Glu-2154–Val-2204, and Ser-2239–Gly-2273. A compositionally biased stretch (acidic residues) spans Glu-2002–Asn-2016. Positions Tyr-2019–Lys-2151 constitute a RanBD1 3 domain. A compositionally biased stretch (polar residues) spans Ser-2161 to Asn-2175. The span at Ser-2239–Ala-2257 shows a compositional bias: low complexity. A run of 11 repeats spans residues Phe-2260–Gly-2261, Phe-2313–Gly-2314, Phe-2332–Gly-2333, Phe-2352–Gly-2353, Phe-2360–Gly-2361, Phe-2366–Gly-2367, Phe-2393–Gly-2394, Phe-2399–Gly-2400, Phe-2415–Gly-2416, Phe-2421–Gly-2422, and Phe-2580–Gly-2581. Residues Ala-2320–Glu-2346 form a disordered region. In terms of domain architecture, RanBD1 4 spans His-2556–Ala-2699.

The protein belongs to the RanBP2 E3 ligase family. In terms of assembly, part of the nuclear pore complex. Forms a complex with Nxt1, sbr/Nxf1 and RanGAP. Interacts (via TPR repeats) with Hsp83; the interaction is required for the nuclear import of the sesquiterpenoid juvenile hormone receptor Met. Interacts (via N-terminus) with piwi. In terms of tissue distribution, expressed in both oocytes and nurse cells (at protein level).

It localises to the nucleus. It is found in the nuclear pore complex. E3 SUMO-protein ligase. Component of the nuclear pore complex (NPC), a complex required for trafficking across the nuclear envelope. Required for nuclear import of nuclear localization signal (NLS)-containing proteins in an importin alpha/importin beta-dependent manner, but also for the nuclear import of specific proteins such as phosphorylated Mad or the sesquiterpenoid juvenile hormone receptor Met as part of the juvenile hormone signal transduction pathway. Plays a role in nuclear mRNA export by recruiting the mRNA transport complex composed of Nxt1 and sbr/Nxf1 to the NPC. Essential during germline development for transposon silencing and piRNA biogenesis probably by regulating piwi localization to the nucleus. During oogenesis, required to form granules that modulate the biogenesis of annulate lamellae containing nuclear pore complex components. The sequence is that of E3 SUMO-protein ligase RanBP2 from Drosophila melanogaster (Fruit fly).